The following is a 4625-amino-acid chain: Dynein-1-alpha heavy chain, flagellar inner arm I1 complex (4625 aa).

The stem stretch occupies residues 1-1919; sequence MDRRLEWVKE…LIRQCTGLFK (1919 aa). Residues 70 to 84 are compositionally biased toward acidic residues; sequence EQAPEAEDGEGEEHD. Positions 70-163 are disordered; it reads EQAPEAEDGE…DEPPAPPAPK (94 aa). Over residues 111–140 the composition is skewed to low complexity; the sequence is EDAPAAAAEANGANPEDEAAAPADGAADGA. Over residues 144–155 the composition is skewed to acidic residues; it reads GGEEGDGAEGDE. 960-967 serves as a coordination point for ATP; it reads AGTNSGKS. Coiled coils occupy residues 1227–1259 and 1339–1409; these read EELKQVLNTVNTIRGESMVMELRYADLEERYRT and TVEL…AVRQ. AAA stretches follow at residues 1920-2141, 2201-2437, 2550-2800, and 2906-3155; these read YGYE…VLVM, DVVE…RRPK, EPPA…IYEG, and NFYN…LRRY. ATP contacts are provided by residues 1958-1965, 2242-2249, 2588-2595, and 2945-2952; these read GPAGTGKT, GQTGGGKT, GESGTAKS, and GVGGSGKQ. Coiled coils occupy residues 3192-3297 and 3400-3494; these read LEKL…IRSY and KRKK…LIGD. A stalk region spans residues 3192-3494; it reads LEKLIQAAVE…ESRRDRLIGD (303 aa). AAA regions lie at residues 3542 to 3773 and 3998 to 4216; these read LTSD…EIAE and ITRF…LIST. Residue 3680–3687 participates in ATP binding; that stretch reads GPEISGKT. Residues 3701–3788 are a coiled coil; sequence EQLLNVTLRH…KVTAAEIEET (88 aa).

This sequence belongs to the dynein heavy chain family. In terms of assembly, the I1 inner arm complex (also known as the f dynein complex) is a two-headed isoform composed of two heavy chains (1-alpha and 1-beta), three intermediate chains and three light chains. I1 occupies a specific position proximal to the first radial spoke and repeats every 96 nm along the length of the axoneme.

The protein resides in the cell projection. It localises to the cilium. It is found in the flagellum. Its subcellular location is the cytoplasm. The protein localises to the cytoskeleton. The protein resides in the flagellum axoneme. Its function is as follows. Force generating protein of eukaryotic cilia and flagella. Produces force towards the minus ends of microtubules. Dynein has ATPase activity; the force-producing power stroke is thought to occur on release of ADP. Required for assembly of the I1 inner arm complex and its targeting to the appropriate axoneme location. Also required for phototaxis. The protein is Dynein-1-alpha heavy chain, flagellar inner arm I1 complex (DHC1) of Chlamydomonas reinhardtii (Chlamydomonas smithii).